The sequence spans 537 residues: Fusion glycoprotein F0 (537 aa).

A signal peptide spans 1–21 (MIPGRIFLVLLVIFNTKPIHP). The Extracellular segment spans residues 26–486 (EKYYESTCSV…DLSENRENKN (461 aa)). Cystine bridges form between cysteine 33-cysteine 402, cysteine 65-cysteine 177, cysteine 278-cysteine 306, cysteine 287-cysteine 296, cysteine 321-cysteine 330, cysteine 345-cysteine 356, and cysteine 379-cysteine 385. Residues 102–122 (FLGLILGLGAAVTAGVALAKT) are fusion peptide. A coiled-coil region spans residues 120–174 (AKTVQLESEIALIRDAVRNTNEAVVSLTNGMSVLAKVVDDLKNFISKELLPKINR). Positions 444-479 (LSFPDDKFDVAIRDVEHSINQTRTFFKASDQLLDLS) form a coiled coil. Asparagine 463 carries an N-linked (GlcNAc...) asparagine; by host glycan. Residues 487–515 (LNKSYILTTLLFVVMLIIIMAVIGFILYK) form a helical membrane-spanning segment. At 516–537 (VLKMIRDNKLKSKSTPGLTVLS) the chain is on the cytoplasmic side.

Belongs to the paramyxoviruses fusion glycoprotein family. In terms of assembly, homotrimer. Heterodimer with fusion protein F2; disulfide-linked. Part of a complex composed of F1, F2 and G glycoproteins. Homotrimer. Heterodimer with fusion protein F1; disulfide-linked. Part of a complex composed of F1, F2 and G glycoproteins. In terms of processing, the F glycoprotein is synthesized as a F0 inactive precursor that is heavily N-glycosylated and processed by a host furin-like protease probably in the Golgi.

It is found in the host Golgi apparatus membrane. The protein localises to the virion membrane. Its subcellular location is the host cell membrane. In terms of biological role, inactive precursor that is cleaved by a furin-like protease to give rise to the mature F1 and F2 fusion glycoproteins. Class I viral fusion protein. Under the current model, the protein has at least 3 conformational states: pre-fusion native state, pre-hairpin intermediate state, and post-fusion hairpin state. During viral and plasma cell membrane fusion, the coiled coil regions assume a trimer-of-hairpins structure, positioning the fusion peptide in close proximity to the C-terminal region of the ectodomain. The formation of this structure appears to drive apposition and subsequent fusion of viral and cellular membranes leading to delivery of the nucleocapsid into the cytoplasm. This fusion is pH independent and occurs at the plasma or endosomal membrane. The trimer of F1-F2 (F protein) also facilitates the attachment and entry into the host cell. Later in infection, F protein expressed at the plasma membrane of infected cells can mediate fusion with adjacent cells to form syncytia, a cytopathic effect that could lead to tissue necrosis. Functionally, major determinant of the species specificity of RSV infection. The trimer of F1-F2 (F protein) also facilitates the attachment and entry into the host cell. Later in infection, F protein expressed at the plasma membrane of infected cells can mediate fusion with adjacent cells to form syncytia, a cytopathic effect that could lead to tissue necrosis. This chain is Fusion glycoprotein F0 (F), found in Mus musculus (Mouse).